The following is a 400-amino-acid chain: Transcription initiation factor IIF subunit beta (400 aa).

The segment covering Met-1–Val-19 has biased composition (polar residues). A disordered region spans residues Met-1–Asn-47. 3 positions are modified to phosphoserine: Ser-28, Ser-34, and Ser-56. Acidic residues predominate over residues Leu-33–Asn-47. Disordered stretches follow at residues Gln-165 to Asp-194 and Thr-366 to Val-400. Residues Lys-174–His-189 are compositionally biased toward basic residues. Over residues Ala-386–Val-400 the composition is skewed to acidic residues.

Belongs to the TFIIF beta subunit family. In terms of assembly, TFIIF is composed of three different subunits: TFG1/RAP74, TFG2/RAP30 and TAF14.

The protein localises to the nucleus. In terms of biological role, TFIIF is a general transcription initiation factor that binds to RNA polymerase II. Its functions include the recruitment of RNA polymerase II to the promoter bound DNA-TBP-TFIIB complex, decreasing the affinity of RNA polymerase II for non-specific DNA, allowing for the subsequent recruitment of TFIIE and TFIIH, and facilitating RNA polymerase II elongation. The chain is Transcription initiation factor IIF subunit beta (TFG2) from Saccharomyces cerevisiae (strain ATCC 204508 / S288c) (Baker's yeast).